A 390-amino-acid polypeptide reads, in one-letter code: Elongation factor Tu 2 (390 aa).

Residues 10–203 (KPHLNIGTMG…AVDTYVPMPE (194 aa)) enclose the tr-type G domain. Positions 19 to 26 (GHVDHGKT) are G1. 19–26 (GHVDHGKT) lines the GTP pocket. T26 lines the Mg(2+) pocket. Residues 60 to 64 (GITIN) are G2. Residues 81–84 (DMPG) form a G3 region. GTP is bound by residues 81–85 (DMPGH) and 136–139 (NKAD). Positions 136-139 (NKAD) are G4. The tract at residues 173 to 175 (SGL) is G5.

The protein belongs to the TRAFAC class translation factor GTPase superfamily. Classic translation factor GTPase family. EF-Tu/EF-1A subfamily. In terms of assembly, monomer.

The protein resides in the cytoplasm. The enzyme catalyses GTP + H2O = GDP + phosphate + H(+). Its function is as follows. GTP hydrolase that promotes the GTP-dependent binding of aminoacyl-tRNA to the A-site of ribosomes during protein biosynthesis. The polypeptide is Elongation factor Tu 2 (Streptomyces avermitilis (strain ATCC 31267 / DSM 46492 / JCM 5070 / NBRC 14893 / NCIMB 12804 / NRRL 8165 / MA-4680)).